Consider the following 452-residue polypeptide: Bifunctional protein GlmU (452 aa).

The segment at 1-226 (MVAVAILAAG…SQEILGINDR (226 aa)) is pyrophosphorylase. UDP-N-acetyl-alpha-D-glucosamine is bound by residues 7–10 (LAAG), lysine 21, glutamine 73, and 78–79 (GT). Aspartate 103 lines the Mg(2+) pocket. UDP-N-acetyl-alpha-D-glucosamine contacts are provided by glycine 140, glutamate 155, asparagine 170, and asparagine 224. Residue asparagine 224 participates in Mg(2+) binding. The segment at 227–247 (LQLADSFRILQERIRQQWMLA) is linker. Positions 248 to 452 (GVTLVDPTSI…ENWSTPTTEQ (205 aa)) are N-acetyltransferase. Arginine 329 and lysine 347 together coordinate UDP-N-acetyl-alpha-D-glucosamine. The active-site Proton acceptor is histidine 359. Tyrosine 362 and asparagine 373 together coordinate UDP-N-acetyl-alpha-D-glucosamine. Residues alanine 376, 382–383 (NY), alanine 419, and arginine 436 contribute to the acetyl-CoA site.

This sequence in the N-terminal section; belongs to the N-acetylglucosamine-1-phosphate uridyltransferase family. The protein in the C-terminal section; belongs to the transferase hexapeptide repeat family. Homotrimer. The cofactor is Mg(2+).

The protein resides in the cytoplasm. The enzyme catalyses alpha-D-glucosamine 1-phosphate + acetyl-CoA = N-acetyl-alpha-D-glucosamine 1-phosphate + CoA + H(+). It carries out the reaction N-acetyl-alpha-D-glucosamine 1-phosphate + UTP + H(+) = UDP-N-acetyl-alpha-D-glucosamine + diphosphate. It participates in nucleotide-sugar biosynthesis; UDP-N-acetyl-alpha-D-glucosamine biosynthesis; N-acetyl-alpha-D-glucosamine 1-phosphate from alpha-D-glucosamine 6-phosphate (route II): step 2/2. Its pathway is nucleotide-sugar biosynthesis; UDP-N-acetyl-alpha-D-glucosamine biosynthesis; UDP-N-acetyl-alpha-D-glucosamine from N-acetyl-alpha-D-glucosamine 1-phosphate: step 1/1. It functions in the pathway bacterial outer membrane biogenesis; LPS lipid A biosynthesis. Catalyzes the last two sequential reactions in the de novo biosynthetic pathway for UDP-N-acetylglucosamine (UDP-GlcNAc). The C-terminal domain catalyzes the transfer of acetyl group from acetyl coenzyme A to glucosamine-1-phosphate (GlcN-1-P) to produce N-acetylglucosamine-1-phosphate (GlcNAc-1-P), which is converted into UDP-GlcNAc by the transfer of uridine 5-monophosphate (from uridine 5-triphosphate), a reaction catalyzed by the N-terminal domain. The chain is Bifunctional protein GlmU from Synechococcus sp. (strain ATCC 27144 / PCC 6301 / SAUG 1402/1) (Anacystis nidulans).